Consider the following 343-residue polypeptide: Putative KilA-N domain-containing protein R904 (343 aa).

The 107-residue stretch at 51-157 (EFSWGNYLNL…IKASVIINDY (107 aa)) folds into the KilA-N domain. A coiled-coil region spans residues 159-279 (AKQMFKEHEK…NAVKEYKELY (121 aa)).

In Acanthamoeba polyphaga mimivirus (APMV), this protein is Putative KilA-N domain-containing protein R904.